A 260-amino-acid chain; its full sequence is Large ribosomal subunit protein uL2 (260 aa).

Residues 208 to 230 (EHPHGGGNHQHIGHPSTVRRDAS) form a disordered region.

It belongs to the universal ribosomal protein uL2 family.

It is found in the cytoplasm. The chain is Large ribosomal subunit protein uL2 from Caenorhabditis elegans.